A 760-amino-acid chain; its full sequence is NAD(P)H-quinone oxidoreductase subunit 5, chloroplastic (760 aa).

Helical transmembrane passes span 9-29 (WIIS…LLLF), 39-59 (IWAF…IDLF), 89-109 (IDPL…LVLV), 125-145 (FVYM…SNLI), 147-167 (IYIF…FWFT), 185-205 (GDFG…SFEF), 221-241 (NEVH…GAIA), 260-280 (TPIS…FLVA), 282-302 (LLPL…IGII), 329-349 (LGYT…FHLI), 356-376 (ALLF…VGYS), 398-418 (IAFL…CFWS), 429-449 (YSPI…FYMF), 556-576 (ILFP…IGIP), 620-640 (FSVS…KPIY), and 734-754 (FYLL…SSIF).

Belongs to the complex I subunit 5 family. As to quaternary structure, NDH is composed of at least 16 different subunits, 5 of which are encoded in the nucleus.

The protein localises to the plastid. Its subcellular location is the chloroplast thylakoid membrane. The enzyme catalyses a plastoquinone + NADH + (n+1) H(+)(in) = a plastoquinol + NAD(+) + n H(+)(out). It catalyses the reaction a plastoquinone + NADPH + (n+1) H(+)(in) = a plastoquinol + NADP(+) + n H(+)(out). In terms of biological role, NDH shuttles electrons from NAD(P)H:plastoquinone, via FMN and iron-sulfur (Fe-S) centers, to quinones in the photosynthetic chain and possibly in a chloroplast respiratory chain. The immediate electron acceptor for the enzyme in this species is believed to be plastoquinone. Couples the redox reaction to proton translocation, and thus conserves the redox energy in a proton gradient. The sequence is that of NAD(P)H-quinone oxidoreductase subunit 5, chloroplastic (ndhF) from Populus trichocarpa (Western balsam poplar).